Here is a 66-residue protein sequence, read N- to C-terminus: MGMRMMFTVFLLVVLAATIVSFTSDRASDGRNVAAKAFHRIGRTIRDECCSNPACRVNNPHVCRRR.

A signal peptide spans 1 to 21 (MGMRMMFTVFLLVVLAATIVS). Residues 22–44 (FTSDRASDGRNVAAKAFHRIGRT) constitute a propeptide that is removed on maturation. Residues 45 to 48 (IRDE) are N-terminal tail important for activity on alpha-3-beta-2/CHRNA3-CHRNB2 and alpha-4-beta-2/CHRNA4-CHRNB2 nAChR. Residue glutamate 48 is modified to 4-carboxyglutamate. Cystine bridges form between cysteine 49–cysteine 55 and cysteine 50–cysteine 63. Residues 51 to 53 (SNP) are ser-Xaa-Pro motif, crucial for potent interaction with nAChR. Proline 60 bears the 4-hydroxyproline mark.

It belongs to the conotoxin A superfamily. Post-translationally, gamma-carboxyglutamation of Glu-48 seems to be not important for nAChR inhibition, since synthetic peptides without this modification do not show change in inhibition of alpha-7/CHRNA7 and alpha-3-beta-2/CHRNA3-CHRNB2 nAChR and show a 2.3-fold increase in inhibition of alpha-4-beta-2/CHRNA4-CHRNB2 nAChR. In terms of processing, hydroxylation of Pro-60 seems to be important for nAChR inhibition, since synthetic peptides without this modification show a small decrease in inhibition of alpha-7/CHRNA7 and alpha-3-beta-2/CHRNA3-CHRNB2 nAChR and a very important decrease in inhibition of alpha-4-beta-2/CHRNA4-CHRNB2 nAChR. An amidation of Cys-63 increases potency against alpha-7/CHRNA7 (2.6-fold) and alpha-3-beta-2/CHRNA3-CHRNB2 (2-fold) nAChR. On the other hand, the peptide has no more activity on alpha-4-beta-2/CHRNA4-CHRNB2 nAChR with an amidated Cys-63. As to expression, expressed by the venom duct.

The protein resides in the secreted. In terms of biological role, alpha-conotoxins act on postsynaptic membranes, they bind to the nicotinic acetylcholine receptors (nAChR) and thus inhibit them. This toxin reversibly blocks alpha-3-beta-2/CHRNA3-CHRNB2 (IC(50)=3.1-5.1 nM), alpha-7/CHRNA7 (IC(50)=4.5-5.1 nM), and alpha-4-beta-2/CHRNA4-CHRNB2 (IC(50)=128.6-390 nM) nAChRs. This is Alpha-conotoxin GID from Conus geographus (Geography cone).